Consider the following 450-residue polypeptide: Probable ATP-dependent RNA helicase MG425 homolog (450 aa).

The short motif at 3-31 (STFNELGVSPALIATLKDNNINQPTTIQQ) is the Q motif element. The Helicase ATP-binding domain occupies 34-206 (IPQFLQHQNL…KQITKNGIFL (173 aa)). 47–54 (SPTGTGKT) provides a ligand contact to ATP. The DEVD box motif lies at 154-157 (DEVD). Positions 234-384 (RKKQALYSLV…PLRPMRLRLI (151 aa)) constitute a Helicase C-terminal domain. The tract at residues 429-450 (MRQPERDMQKNKLHDSDWQSNM) is disordered. A compositionally biased stretch (basic and acidic residues) spans 430–450 (RQPERDMQKNKLHDSDWQSNM).

Belongs to the DEAD box helicase family.

The catalysed reaction is ATP + H2O = ADP + phosphate + H(+). The sequence is that of Probable ATP-dependent RNA helicase MG425 homolog from Mycoplasma pneumoniae (strain ATCC 29342 / M129 / Subtype 1) (Mycoplasmoides pneumoniae).